Here is a 236-residue protein sequence, read N- to C-terminus: Purine nucleoside phosphorylase DeoD-type 2 (236 aa).

An a purine D-ribonucleoside-binding site is contributed by His-5. Residues Gly-21, Arg-25, Arg-44, and 88 to 91 (RVGS) contribute to the phosphate site. Residues 180-182 (DME) and 204-205 (SD) contribute to the a purine D-ribonucleoside site. The active-site Proton donor is the Asp-205.

The protein belongs to the PNP/UDP phosphorylase family. Homohexamer; trimer of homodimers.

The catalysed reaction is a purine D-ribonucleoside + phosphate = a purine nucleobase + alpha-D-ribose 1-phosphate. The enzyme catalyses a purine 2'-deoxy-D-ribonucleoside + phosphate = a purine nucleobase + 2-deoxy-alpha-D-ribose 1-phosphate. Catalyzes the reversible phosphorolytic breakdown of the N-glycosidic bond in the beta-(deoxy)ribonucleoside molecules, with the formation of the corresponding free purine bases and pentose-1-phosphate. The polypeptide is Purine nucleoside phosphorylase DeoD-type 2 (Vibrio parahaemolyticus serotype O3:K6 (strain RIMD 2210633)).